Reading from the N-terminus, the 1571-residue chain is Guanine nucleotide-releasing factor 2 (1571 aa).

Disordered stretches follow at residues 28-85 (LPPH…RDTN), 202-271 (INSG…KLAR), and 287-316 (MRTT…PTTE). Basic residues predominate over residues 55–73 (QLHHHHHQQHHHNHHRLWK). The segment covering 74-83 (TQRQSWSPRD) has biased composition (polar residues). Positions 230–248 (TPGGSSRVGGAGAGGGGGV) are enriched in gly residues. Polar residues predominate over residues 287–297 (MRTTNNTLGRS). A compositionally biased stretch (basic residues) spans 298-309 (HSPHSPRTKHGT). Residues serine 496 and serine 523 each carry the phosphoserine modification. Disordered regions lie at residues 513 to 580 (HNVN…QASP), 614 to 646 (RSRS…HQHL), 695 to 719 (GEGV…ESGF), 728 to 747 (STQT…SSNS), 776 to 868 (QRHI…SEVA), and 879 to 898 (LNHH…HSKH). Residue threonine 524 is modified to Phosphothreonine. Serine 526 is modified (phosphoserine). Over residues 532-550 (SPPPKPPLPNRASNPPPLP) the composition is skewed to pro residues. The short motif at 546–556 (PPPLPPKRRSQ) is the SH3-binding element. A compositionally biased stretch (low complexity) spans 556 to 579 (QPSASAGTVGVGCSSSTSTSNQAS). At serine 615 the chain carries Phosphoserine. Over residues 620-631 (ENSQCSFDSALN) the composition is skewed to polar residues. A compositionally biased stretch (low complexity) spans 697–707 (GVAAAASGDGE). The span at 708-718 (TNSNRHSNESG) shows a compositional bias: polar residues. 2 stretches are compositionally biased toward low complexity: residues 735-747 (SVQS…SSNS) and 780-824 (SSSS…DLAP). Residues 820–831 (ADLAPALPPKSI) carry the SH3-binding motif. The span at 851–866 (VQSSSGWASHRSSQSE) shows a compositional bias: polar residues. Short sequence motifs (SH3-binding) lie at residues 924 to 935 (DQEPPPLPIKKK) and 986 to 997 (LEMPPALPPKNY). Residues 1013–1038 (PVIVTTPPPSPKPTLGENGSTGRPDS) are disordered. Residues 1170-1292 (DGPEVKGGYI…LRNKFVEKVT (123 aa)) enclose the N-terminal Ras-GEF domain. Residues 1339–1564 (KSLEIAEQMT…WQISEKIKPR (226 aa)) form the Ras-GEF domain.

In terms of tissue distribution, ubiquitous.

Guanine nucleotide-releasing protein that binds to SH3 domain of Crk. Transduces signals from Crk to activate RAS. Also involved in MAPK activation. The protein is Guanine nucleotide-releasing factor 2 (C3G) of Drosophila melanogaster (Fruit fly).